The primary structure comprises 485 residues: Argininosuccinate lyase (485 aa).

Belongs to the lyase 1 family. Argininosuccinate lyase subfamily.

The protein resides in the cytoplasm. The enzyme catalyses 2-(N(omega)-L-arginino)succinate = fumarate + L-arginine. It functions in the pathway amino-acid biosynthesis; L-arginine biosynthesis; L-arginine from L-ornithine and carbamoyl phosphate: step 3/3. This chain is Argininosuccinate lyase, found in Nitrosopumilus maritimus (strain SCM1).